The chain runs to 330 residues: Zinc finger protein sdz-12 (330 aa).

5 C2H2-type zinc fingers span residues 27 to 48 (PQCQVCKRKFANQKTLRTHMKH), 63 to 85 (FRCENCEKQFTNKPNLKRHQITH), 91 to 113 (KKCSTCQRTFFREDQLQRHLHNH), 120 to 144 (FDCPVLNCSMQFVFYEGVENHLVNH), and 153 to 176 (APCGKCHKLFGSPRHLLVHYHFDH). Residues 183–195 (SAPAPTSSARLSP) are compositionally biased toward low complexity. The disordered stretch occupies residues 183–203 (SAPAPTSSARLSPITVSTSGS). A C2H2-type 6 zinc finger spans residues 271–293 (FECKHCTIKFHDATMSIMHNALH).

This sequence belongs to the krueppel C2H2-type zinc-finger protein family. In terms of tissue distribution, expressed in the somatic gonad.

Together with ehn-3, may play a role in gonadogenesis. The polypeptide is Zinc finger protein sdz-12 (Caenorhabditis elegans).